Here is a 1581-residue protein sequence, read N- to C-terminus: Laminin subunit gamma-3 (1581 aa).

Positions methionine 1–glycine 28 are cleaved as a signal peptide. Residues arginine 40 to arginine 279 form the Laminin N-terminal domain. Asparagine 128 is a glycosylation site (N-linked (GlcNAc...) asparagine). 16 disulfide bridges follow: cysteine 280/cysteine 289, cysteine 282/cysteine 299, cysteine 301/cysteine 310, cysteine 313/cysteine 333, cysteine 336/cysteine 345, cysteine 338/cysteine 361, cysteine 364/cysteine 373, cysteine 376/cysteine 389, cysteine 392/cysteine 404, cysteine 394/cysteine 410, cysteine 412/cysteine 421, cysteine 424/cysteine 436, cysteine 439/cysteine 450, cysteine 441/cysteine 457, cysteine 459/cysteine 468, and cysteine 471/cysteine 486. Laminin EGF-like domains are found at residues cysteine 280–proline 335, cysteine 336–proline 391, cysteine 392–proline 438, and cysteine 439–serine 488. N-linked (GlcNAc...) asparagine glycosylation is present at asparagine 304. An N-linked (GlcNAc...) asparagine glycan is attached at asparagine 337. A Laminin EGF-like 5; first part domain is found at cysteine 489–cysteine 498. Residues histidine 508–threonine 684 enclose the Laminin IV type A domain. Asparagine 640 carries an N-linked (GlcNAc...) asparagine glycan. Positions cysteine 685–proline 718 constitute a Laminin EGF-like 5; second part domain. 24 disulfides stabilise this stretch: cysteine 719–cysteine 727, cysteine 721–cysteine 734, cysteine 736–cysteine 745, cysteine 748–cysteine 764, cysteine 767–cysteine 775, cysteine 769–cysteine 786, cysteine 789–cysteine 798, cysteine 801–cysteine 819, cysteine 822–cysteine 836, cysteine 824–cysteine 843, cysteine 846–cysteine 855, cysteine 858–cysteine 875, cysteine 878–cysteine 891, cysteine 880–cysteine 898, cysteine 900–cysteine 909, cysteine 912–cysteine 925, cysteine 928–cysteine 940, cysteine 930–cysteine 947, cysteine 949–cysteine 958, cysteine 961–cysteine 973, cysteine 976–cysteine 988, cysteine 978–cysteine 994, cysteine 996–cysteine 1005, and cysteine 1008–cysteine 1021. Laminin EGF-like domains lie at cysteine 719 to proline 766, cysteine 767 to arginine 821, cysteine 822 to proline 877, cysteine 878 to serine 927, cysteine 928 to aspartate 975, and cysteine 976 to cysteine 1024. N-linked (GlcNAc...) asparagine glycosylation is present at asparagine 849. Asparagine 991 carries N-linked (GlcNAc...) asparagine glycosylation. Residues proline 1025 to serine 1581 are domain II and I. Coiled coils occupy residues alanine 1029 to glutamate 1046 and valine 1112 to leucine 1153. Residues asparagine 1162 and asparagine 1196 are each glycosylated (N-linked (GlcNAc...) asparagine). Residues arginine 1208–leucine 1231 are a coiled coil. The N-linked (GlcNAc...) asparagine glycan is linked to asparagine 1320. The segment at lysine 1382–serine 1413 is disordered. Coiled coils occupy residues alanine 1438–valine 1468 and alanine 1510–leucine 1575. Residue asparagine 1514 is glycosylated (N-linked (GlcNAc...) asparagine).

In terms of assembly, laminin is a complex glycoprotein, consisting of three different polypeptide chains (alpha, beta, gamma), which are bound to each other by disulfide bonds into a cross-shaped molecule comprising one long and three short arms with globules at each end. Gamma-3 is a subunit of laminin-12 (laminin-213), laminin-14 (laminin-423) and laminin-15 (laminin-523). As to expression, strongly expressed in capillaries and arterioles of kidney as well as in interstitial Leydig cells of testis.

It is found in the secreted. It localises to the extracellular space. The protein localises to the extracellular matrix. Its subcellular location is the basement membrane. Functionally, binding to cells via a high affinity receptor, laminin is thought to mediate the attachment, migration and organization of cells into tissues during embryonic development by interacting with other extracellular matrix components. The chain is Laminin subunit gamma-3 (Lamc3) from Mus musculus (Mouse).